The primary structure comprises 429 residues: Nocturnin (429 aa).

The N-terminal 73 residues, 1 to 73 (MYQSPRRLCS…SMGNGTSRLY (73 aa)), are a transit peptide targeting the mitochondrion. The segment at 21–68 (RRTLVPGPRRTLAPPVLGSRPKSPQLQAAAASGAARSRPRTVSSMGNG) is disordered. Glu-193 is a binding site for Mg(2+). Substrate is bound by residues Glu-193, 217 to 219 (KPW), Asn-261, 284 to 287 (HLKA), and 322 to 324 (DFN). The tract at residues 341–351 (NLNSAYKLLSP) is interaction with PPARG. Residue His-412 participates in substrate binding.

Belongs to the CCR4/nocturin family. As to quaternary structure, interacts with PPARG. Mg(2+) is required as a cofactor. In terms of tissue distribution, highly expressed in the differentiated adipocyte (at protein level). Ubiquitous.

It is found in the cytoplasm. It localises to the nucleus. The protein localises to the perinuclear region. The protein resides in the mitochondrion. It catalyses the reaction NADP(+) + H2O = phosphate + NAD(+). The enzyme catalyses NADPH + H2O = phosphate + NADH. Phosphatase which catalyzes the conversion of NADP(+) to NAD(+) and of NADPH to NADH. Shows a small preference for NADPH over NADP(+). Represses translation and promotes degradation of target mRNA molecules. Plays an important role in post-transcriptional regulation of metabolic genes under circadian control. Exerts a rhythmic post-transcriptional control of genes necessary for metabolic functions including nutrient absorption, glucose/insulin sensitivity, lipid metabolism, adipogenesis, inflammation and osteogenesis. Plays an important role in favoring adipogenesis over osteoblastogenesis and acts as a key regulator of the adipogenesis/osteogenesis balance. Promotes adipogenesis by facilitating PPARG nuclear translocation which activates its transcriptional activity. Regulates circadian expression of NOS2 in the liver and negatively regulates the circadian expression of IGF1 in the bone. Critical for proper development of early embryos. This chain is Nocturnin, found in Mus musculus (Mouse).